A 659-amino-acid chain; its full sequence is Hemocyanin subunit B (659 aa).

A signal peptide spans 1–18 (MVAKWCVLAMCLLVAVGA). Residues histidine 198, histidine 202, and histidine 232 each coordinate Cu cation. A glycan (N-linked (GlcNAc...) asparagine) is linked at asparagine 318. Positions 353, 357, and 393 each coordinate Cu cation. A disulfide bond links cysteine 562 and cysteine 609.

The protein belongs to the tyrosinase family. Hemocyanin subfamily. 36-chain polymer consisting of 6 hexamers, each of which includes 4 different chains, A, B, C and D. In terms of tissue distribution, hemolymph.

It localises to the secreted. The protein localises to the extracellular space. Hemocyanins are copper-containing oxygen carriers occurring freely dissolved in the hemolymph of many mollusks and arthropods. The chain is Hemocyanin subunit B (HCB) from Scutigera coleoptrata (House centipede).